The chain runs to 651 residues: Acetyl-coenzyme A synthetase (651 aa).

Residues 189-192, Thr311, and Asn335 contribute to the CoA site; that span reads RGGK. Residues 387–389, 411–416, Asp500, and Arg515 each bind ATP; these read GEP and DTWWQT. Residue Ser523 participates in CoA binding. Arg526 is an ATP binding site. Mg(2+)-binding residues include Val537, His539, and Val542. Position 586 (Arg586) interacts with CoA. N6-acetyllysine is present on Lys611.

The protein belongs to the ATP-dependent AMP-binding enzyme family. Mg(2+) serves as cofactor. In terms of processing, acetylated. Deacetylation by the SIR2-homolog deacetylase activates the enzyme.

It carries out the reaction acetate + ATP + CoA = acetyl-CoA + AMP + diphosphate. Functionally, catalyzes the conversion of acetate into acetyl-CoA (AcCoA), an essential intermediate at the junction of anabolic and catabolic pathways. AcsA undergoes a two-step reaction. In the first half reaction, AcsA combines acetate with ATP to form acetyl-adenylate (AcAMP) intermediate. In the second half reaction, it can then transfer the acetyl group from AcAMP to the sulfhydryl group of CoA, forming the product AcCoA. This Brucella melitensis biotype 2 (strain ATCC 23457) protein is Acetyl-coenzyme A synthetase.